Consider the following 392-residue polypeptide: Phosphoglycerate kinase (392 aa).

Substrate-binding positions include 21–23, Arg-36, 59–62, Arg-113, and Arg-146; these read DFN and HLGR. Residues Lys-197, Glu-319, and 345–348 each bind ATP; that span reads GGDT.

Belongs to the phosphoglycerate kinase family. In terms of assembly, monomer.

It localises to the cytoplasm. The enzyme catalyses (2R)-3-phosphoglycerate + ATP = (2R)-3-phospho-glyceroyl phosphate + ADP. Its pathway is carbohydrate degradation; glycolysis; pyruvate from D-glyceraldehyde 3-phosphate: step 2/5. The polypeptide is Phosphoglycerate kinase (Francisella tularensis subsp. tularensis (strain FSC 198)).